We begin with the raw amino-acid sequence, 213 residues long: Orotate phosphoribosyltransferase (213 aa).

5-phospho-alpha-D-ribose 1-diphosphate is bound at residue Lys-26. Phe-34–Phe-35 is a binding site for orotate. 5-phospho-alpha-D-ribose 1-diphosphate-binding positions include Tyr-72–Lys-73, Arg-99, Lys-100, Lys-103, His-105, and Asp-124–Ala-132. Residues Thr-128 and Arg-156 each contribute to the orotate site.

The protein belongs to the purine/pyrimidine phosphoribosyltransferase family. PyrE subfamily. In terms of assembly, homodimer. The cofactor is Mg(2+).

It catalyses the reaction orotidine 5'-phosphate + diphosphate = orotate + 5-phospho-alpha-D-ribose 1-diphosphate. Its pathway is pyrimidine metabolism; UMP biosynthesis via de novo pathway; UMP from orotate: step 1/2. Catalyzes the transfer of a ribosyl phosphate group from 5-phosphoribose 1-diphosphate to orotate, leading to the formation of orotidine monophosphate (OMP). The sequence is that of Orotate phosphoribosyltransferase from Escherichia coli O45:K1 (strain S88 / ExPEC).